The chain runs to 393 residues: Leucine aminopeptidase 1 (393 aa).

Residues 1–18 (MKLSQVSALAACVPAATA) form the signal peptide. A propeptide spanning residues 19–84 (RFVELMEADH…GSQGLRIKES (66 aa)) is cleaved from the precursor. The N-linked (GlcNAc...) asparagine glycan is linked to Asn176. Zn(2+)-binding residues include His184, Asp202, Glu241, and Asp268. A disulfide bond links Cys317 and Cys321. Position 350 (His350) interacts with Zn(2+).

The protein belongs to the peptidase M28 family. M28E subfamily. Monomer. Zn(2+) serves as cofactor.

It localises to the secreted. Extracellular aminopeptidase that allows assimilation of proteinaceous substrates. The polypeptide is Leucine aminopeptidase 1 (LAP1) (Metarhizium robertsii (strain ARSEF 23 / ATCC MYA-3075) (Metarhizium anisopliae (strain ARSEF 23))).